We begin with the raw amino-acid sequence, 281 residues long: MSKYSDAKELAGLTLGKKTDYANQYDPSLLQPVPRSLNRDDLQLGDELPFMGHDIWTLYELSWLNSKGLPQVAVGEVYIPATSANLIESKSFKLYLNSYNQTRFDSWEEVRQRLITDLSHCAGEAVEVAVNSVTHYTQQPIVTMEGECIDEQDIDISSYDFDDRLLEGAAGEEWVTETLHSHLLKSNCLITNQPDWGSVEIRYQGHKIDREKLLRYLVSFREHNEFHEQCVERIFTDLMKYCQPESLTVFARYTRRGGLDINPYRSTEQAKPDHNHRMARQ.

Residue 87–89 (IES) coordinates substrate. 89-90 (SK) provides a ligand contact to NADPH. The active-site Thioimide intermediate is the C188. D195 functions as the Proton donor in the catalytic mechanism. Residue 227-228 (HE) coordinates substrate. 256–257 (RG) contributes to the NADPH binding site. Residues 261–281 (INPYRSTEQAKPDHNHRMARQ) are disordered. Basic and acidic residues predominate over residues 268 to 281 (EQAKPDHNHRMARQ).

The protein belongs to the GTP cyclohydrolase I family. QueF type 2 subfamily. Homodimer.

The protein resides in the cytoplasm. The catalysed reaction is 7-aminomethyl-7-carbaguanine + 2 NADP(+) = 7-cyano-7-deazaguanine + 2 NADPH + 3 H(+). The protein operates within tRNA modification; tRNA-queuosine biosynthesis. Its function is as follows. Catalyzes the NADPH-dependent reduction of 7-cyano-7-deazaguanine (preQ0) to 7-aminomethyl-7-deazaguanine (preQ1). This Vibrio vulnificus (strain CMCP6) protein is NADPH-dependent 7-cyano-7-deazaguanine reductase.